Here is a 126-residue protein sequence, read N- to C-terminus: Major sperm protein 2 (126 aa).

N-acetylalanine is present on alanine 2. Residues 8–125 (DIATMPNQKV…RRKNLPIEYN (118 aa)) form the MSP domain.

Sperm.

It localises to the cell projection. It is found in the pseudopodium. The protein resides in the cytoplasm. The protein localises to the cytoskeleton. Central component in molecular interactions underlying sperm crawling. Forms an extensive filament system that extends from sperm villipoda, along the leading edge of the pseudopod. In Globodera rostochiensis (Golden nematode worm), this protein is Major sperm protein 2 (MSP-2).